The chain runs to 507 residues: Serine/threonine-protein kinase CBK1 (507 aa).

Residues 1–30 (MQKVSGSGKKTTAFQQRKSDSVYNNNEMNK) form a disordered region. Residues 126–431 (FHTVKVIGKG…ANDIKLHPFF (306 aa)) form the Protein kinase domain. Residues 132 to 140 (IGKGAFGEV) and Lys-155 each bind ATP. The active-site Proton acceptor is Asp-249. Residues 432 to 505 (RGVNWDTIRE…KRFDMMTQKG (74 aa)) form the AGC-kinase C-terminal domain.

Belongs to the protein kinase superfamily. STE Ser/Thr protein kinase family. COT1 subfamily.

The enzyme catalyses L-seryl-[protein] + ATP = O-phospho-L-seryl-[protein] + ADP + H(+). The catalysed reaction is L-threonyl-[protein] + ATP = O-phospho-L-threonyl-[protein] + ADP + H(+). Protein kinase that seems to play a role in signaling pathways necessary for cell growth and mating. The protein is Serine/threonine-protein kinase CBK1 (CBK1) of Pneumocystis carinii.